A 650-amino-acid chain; its full sequence is Transcription factor LHW (650 aa).

Disordered stretches follow at residues Leu381–Tyr417 and Leu431–Met470. Low complexity predominate over residues Val384–Pro397. The Nuclear localization signal signature appears at Asn451–Gly458. Residues Leu455–Leu504 enclose the bHLH domain. A compositionally biased stretch (basic and acidic residues) spans Lys456–Met470.

Belongs to the bHLH protein family. LHW subfamily. In terms of assembly, homodimer. Can also interact with bHLH proteins. In terms of tissue distribution, expressed in both root and shoot meristems. Present in root tips.

The protein localises to the nucleus. Functionally, transcription activator that regulates root development; promotes the production of stele cells in roots. Coordinately controls the number of all vascular cell types by regulating the size of the pool of cells from which they arise. This chain is Transcription factor LHW (LHW), found in Arabidopsis thaliana (Mouse-ear cress).